A 408-amino-acid chain; its full sequence is Lipoate--protein ligase 1 (408 aa).

Residues 1 to 18 constitute a mitochondrion transit peptide; that stretch reads MKRIFRLVRRCHYSTEKR. A BPL/LPL catalytic domain is found at 60 to 242; sequence KFNEPILFLW…EFTKFYEQNY (183 aa). ATP contacts are provided by arginine 102, glycine 107, and tyrosine 110. Residue glycine 107 participates in (R)-lipoate binding. Residue aspartate 153 participates in Mg(2+) binding. Position 160 (lysine 160) interacts with ATP. Lysine 160 provides a ligand contact to (R)-lipoate.

It belongs to the LplA family.

Its subcellular location is the mitochondrion. The catalysed reaction is L-lysyl-[lipoyl-carrier protein] + (R)-lipoate + ATP = N(6)-[(R)-lipoyl]-L-lysyl-[lipoyl-carrier protein] + AMP + diphosphate + H(+). It carries out the reaction (R)-dihydrolipoate + L-lysyl-[lipoyl-carrier protein] + ATP = N(6)-[(R)-dihydrolipoyl]-L-lysyl-[lipoyl-carrier protein] + AMP + diphosphate + H(+). It catalyses the reaction (R)-dihydrolipoate + ATP + H(+) = N(6)-[(R)-dihydrolipoyl]-5'-AMP + diphosphate. The enzyme catalyses N(6)-[(R)-dihydrolipoyl]-5'-AMP + L-lysyl-[lipoyl-carrier protein] = N(6)-[(R)-dihydrolipoyl]-L-lysyl-[lipoyl-carrier protein] + AMP + 2 H(+). The protein operates within protein modification; protein lipoylation via exogenous pathway; protein N(6)-(lipoyl)lysine from lipoate: step 1/2. Its pathway is protein modification; protein lipoylation via exogenous pathway; protein N(6)-(lipoyl)lysine from lipoate: step 2/2. Inhibited by the lipoate analog 8-bromo-octanoate (BrO). Catalytic activity is increased in the presence of Mg(2+). Its function is as follows. Catalyzes both the ATP-dependent activation of exogenously supplied lipoate to lipoyl-AMP and the transfer of the activated lipoyl onto the lipoyl domains of lipoate-dependent enzymes. In the mitochondrion, functions as a redox switch between two lipoylation routes. Senses the oxidation state of lipoate and determines which downstream enzymes will be lipoylated. In low reducing conditions, uses lipoate in its oxidized ring form to lipoylate glycine cleavage system H-protein GCVH. In high reducing conditions and together with LipL2, uses reduced lipoate (dihydrolipoate) to lipoylate the E2 component of the branched chain alpha-ketoacid dehydrogenase complex BCKDH-E2/BCDH and the E2 component of the alpha-ketoglutarate dehydrogenase complex KDH. LipL1 is responsible for catalysing the activation of lipoate, forming lipoyl-AMP while LipL2 is required but is not capable of catalyzing this reaction. The sequence is that of Lipoate--protein ligase 1 from Plasmodium falciparum (isolate 3D7).